The primary structure comprises 241 residues: Probable xyloglucan-specific endo-beta-1,4-glucanase A (241 aa).

The N-terminal stretch at 1-18 (MKFNLALALSLTVATAEA) is a signal peptide.

The protein belongs to the glycosyl hydrolase 12 (cellulase H) family.

It is found in the secreted. It carries out the reaction xyloglucan + H2O = xyloglucan oligosaccharides.. Its function is as follows. Catalyzes endohydrolysis of 1,4-beta-D-glucosidic linkages in xyloglucan with retention of the beta-configuration of the glycosyl residues. Specific for xyloglucan and does not hydrolyze other cell wall components. In Aspergillus clavatus (strain ATCC 1007 / CBS 513.65 / DSM 816 / NCTC 3887 / NRRL 1 / QM 1276 / 107), this protein is Probable xyloglucan-specific endo-beta-1,4-glucanase A (xgeA).